The following is a 91-amino-acid chain: DNA-binding protein HU (91 aa).

This sequence belongs to the bacterial histone-like protein family.

Functionally, histone-like DNA-binding protein which is capable of wrapping DNA to stabilize it, and thus to prevent its denaturation under extreme environmental conditions. In Clostridium pasteurianum, this protein is DNA-binding protein HU (hup).